A 463-amino-acid polypeptide reads, in one-letter code: Ataxin-10 homolog (463 aa).

The protein belongs to the ataxin-10 family.

It localises to the cytoplasm. Functionally, may play a role in the regulation of cytokinesis. The protein is Ataxin-10 homolog (CTR86) of Candida albicans (strain SC5314 / ATCC MYA-2876) (Yeast).